A 239-amino-acid chain; its full sequence is Ribose-5-phosphate isomerase A (239 aa).

Substrate is bound by residues 39–42 (SGST), 95–98 (DGAD), and 108–111 (KGGG). Catalysis depends on Glu-117, which acts as the Proton acceptor. A substrate-binding site is contributed by Lys-135.

The protein belongs to the ribose 5-phosphate isomerase family. In terms of assembly, homodimer.

The enzyme catalyses aldehydo-D-ribose 5-phosphate = D-ribulose 5-phosphate. The protein operates within carbohydrate degradation; pentose phosphate pathway; D-ribose 5-phosphate from D-ribulose 5-phosphate (non-oxidative stage): step 1/1. Its function is as follows. Catalyzes the reversible conversion of ribose-5-phosphate to ribulose 5-phosphate. The protein is Ribose-5-phosphate isomerase A of Chlamydia muridarum (strain MoPn / Nigg).